The primary structure comprises 202 residues: MNLEQIYKDRGAYLEGHFLLSSGKHSQFYLQSAKVLEDPKLAAKLCDELAKIIASYKIEFDSICSPALGGILAGYELARACNKRFIFTERVNKEMTLRRGFEVKKGKKFIICEDIITTGGSALESAKTIESLGGIVVGFAALANRGFCGVENLKSPRKDNAKLPENLPLFTLGNFEFEIYDETNCPLCKKGSKAIKPGSRGN.

Residues Lys-93 and 113-121 (EDIITTGGS) contribute to the 5-phospho-alpha-D-ribose 1-diphosphate site. Orotate contacts are provided by Thr-117 and Arg-145.

This sequence belongs to the purine/pyrimidine phosphoribosyltransferase family. PyrE subfamily. Homodimer. The cofactor is Mg(2+).

It carries out the reaction orotidine 5'-phosphate + diphosphate = orotate + 5-phospho-alpha-D-ribose 1-diphosphate. It functions in the pathway pyrimidine metabolism; UMP biosynthesis via de novo pathway; UMP from orotate: step 1/2. In terms of biological role, catalyzes the transfer of a ribosyl phosphate group from 5-phosphoribose 1-diphosphate to orotate, leading to the formation of orotidine monophosphate (OMP). This chain is Orotate phosphoribosyltransferase, found in Campylobacter jejuni subsp. doylei (strain ATCC BAA-1458 / RM4099 / 269.97).